The following is a 319-amino-acid chain: Ribonuclease Z (319 aa).

7 residues coordinate Zn(2+): His-62, His-64, Asp-66, His-67, His-145, Asp-215, and His-273. Asp-66 acts as the Proton acceptor in catalysis.

It belongs to the RNase Z family. As to quaternary structure, homodimer. Zn(2+) serves as cofactor.

It catalyses the reaction Endonucleolytic cleavage of RNA, removing extra 3' nucleotides from tRNA precursor, generating 3' termini of tRNAs. A 3'-hydroxy group is left at the tRNA terminus and a 5'-phosphoryl group is left at the trailer molecule.. Functionally, zinc phosphodiesterase, which displays some tRNA 3'-processing endonuclease activity. Probably involved in tRNA maturation, by removing a 3'-trailer from precursor tRNA. This Borrelia hermsii (strain HS1 / DAH) protein is Ribonuclease Z.